We begin with the raw amino-acid sequence, 168 residues long: MKSLNRQTVSRFRKLSVPAAIMMLLSTIISGIGTFLHYREELMPSACANGWIQYDKHCYLDTNIKMSTDNAVYQCRKLRARLPRPDTRHLRVLFSIFYKDYWVSLKKTNDKWLDINNDKDIDISKLTNFKQLNSTTDSEACYIYKSGKLVKTVCKSTQSVLCVKRFYK.

The helical transmembrane segment at 15 to 37 threads the bilayer; that stretch reads LSVPAAIMMLLSTIISGIGTFLH. 2 disulfide bridges follow: cysteine 75–cysteine 162 and cysteine 141–cysteine 154. N-linked (GlcNAc...) asparagine; by host glycosylation is present at asparagine 133.

The protein belongs to the orthopoxvirus OPG162 protein family. As to quaternary structure, interacts with protein OPG161. Interacts with protein OPG164. Interacts with protein OPG190.

It is found in the virion membrane. It localises to the host Golgi apparatus. Forms a complex with OPG162 and OPG190 to coordinate the incorporation of OPG164 into wrapped enveloped virion (EV) membranes and, subsequently, the production of actin tails. Therefore plays an essential role in efficient cell-to-cell spread of viral particles. The sequence is that of Protein OPG162 (OPG162) from Monkeypox virus.